The sequence spans 282 residues: MLKFLVKAPAKVNLFLHITGKRSDQHHYLESLFVFVNVYDILEVDVGGSKRGVYFSNLRISKYNNTVYKAIELLLKHSAVCPNVSVSIIKNILVSAGLAGGSADAAAIMRLLGNMWNIDYTLLQDLALKIGSDVPACLESKTLFAKGVGEDILLLPDLLLPKYIILVAPRGKTLSTAKVFNNYQSATYSPSICDKLPVKQDDWMELICNAKNDLLEVALKFVPEIEEILFVLKQLKNSVIARMTGSGATCFALFNELSHAEDAARKLQMTRPDWIIFNAKIL.

Residue Lys-11 is part of the active site. Position 93 to 103 (93 to 103 (LVSAGLAGGSA)) interacts with ATP. Asp-133 is an active-site residue.

This sequence belongs to the GHMP kinase family. IspE subfamily.

The catalysed reaction is 4-CDP-2-C-methyl-D-erythritol + ATP = 4-CDP-2-C-methyl-D-erythritol 2-phosphate + ADP + H(+). Its pathway is isoprenoid biosynthesis; isopentenyl diphosphate biosynthesis via DXP pathway; isopentenyl diphosphate from 1-deoxy-D-xylulose 5-phosphate: step 3/6. In terms of biological role, catalyzes the phosphorylation of the position 2 hydroxy group of 4-diphosphocytidyl-2C-methyl-D-erythritol. The chain is 4-diphosphocytidyl-2-C-methyl-D-erythritol kinase from Ehrlichia chaffeensis (strain ATCC CRL-10679 / Arkansas).